The following is a 341-amino-acid chain: 2-keto-4-carboxy-3-hexenedioate hydratase (341 aa).

Positions 8 and 10 each coordinate Zn(2+). 71 to 73 (RAS) is a binding site for substrate. Position 178 (His-178) interacts with Zn(2+). 2 residues coordinate substrate: Tyr-194 and His-223. Glu-284 functions as the Proton donor/acceptor in the catalytic mechanism. Arg-290 contacts substrate.

The protein belongs to the metallo-dependent hydrolases superfamily. As to quaternary structure, homodimer. Zn(2+) serves as cofactor.

The catalysed reaction is (3Z)-2-oxo-4-carboxy-3-hexenedioate + H2O = (2S)-2-hydroxy-4-oxobutane-1,2,4-tricarboxylate. It participates in secondary metabolite metabolism; lignin degradation. Functionally, contributes to the degradation of lignin at the level of the protocatechuate 4,5-cleavage pathway. Catalyzes the hydration of the double bond of (3Z)-2-keto-4-carboxy-3-hexenedioate (KCH) to (4S)-4-carboxy-4-hydroxy-2-oxoadipate (CHA, also named (2S)-2-hydroxy-4-oxobutane-1,2,4-tricarboxylate). Is involved in the catabolism of both vanillate and syringate. This Sphingobium sp. (strain NBRC 103272 / SYK-6) protein is 2-keto-4-carboxy-3-hexenedioate hydratase.